The primary structure comprises 61 residues: Conotoxin Vn5.3 (61 aa).

Positions 1–19 (MHCLPVFVILLLLIASAPG) are cleaved as a signal peptide. Residues 20–50 (VDVQPKTKNFMTRASLRDFAKKTPKRLSKLR) constitute a propeptide that is removed on maturation.

This sequence belongs to the conotoxin T superfamily. Post-translationally, contains 2 disulfide bonds that can be either 'C1-C3, C2-C4' or 'C1-C4, C2-C3', since these disulfide connectivities have been observed for conotoxins with cysteine framework V (for examples, see AC P0DQQ7 and AC P81755). As to expression, expressed by the venom duct.

Its subcellular location is the secreted. The sequence is that of Conotoxin Vn5.3 from Conus ventricosus (Mediterranean cone).